Here is a 991-residue protein sequence, read N- to C-terminus: UPF0182 protein RHA1_ro08670 (991 aa).

7 helical membrane-spanning segments follow: residues 16–36, 61–81, 115–135, 170–190, 214–234, 263–283, and 291–311; these read VMIM…RLVV, LILF…AVVW, FTVG…QASW, LILA…LGTH, VQLA…YWLD, RLIM…AIAV, and MATA…PALI. The tract at residues 902–940 is disordered; it reads TGAVATAPGGDATTPPPTGGQPPAPPPPGAPPAPPPATS. A compositionally biased stretch (low complexity) spans 903–914; it reads GAVATAPGGDAT. A compositionally biased stretch (pro residues) spans 915–938; sequence TPPPTGGQPPAPPPPGAPPAPPPA.

It belongs to the UPF0182 family.

The protein localises to the cell membrane. In Rhodococcus jostii (strain RHA1), this protein is UPF0182 protein RHA1_ro08670.